Reading from the N-terminus, the 199-residue chain is Peroxiredoxin-1 (199 aa).

Ser-2 is subject to N-acetylserine. A Thioredoxin domain is found at 6-165; that stretch reads AKIGHPAPNF…TLRLVQAFQF (160 aa). N6-acetyllysine; alternate is present on Lys-7. Lys-7 is covalently cross-linked (Glycyl lysine isopeptide (Lys-Gly) (interchain with G-Cter in SUMO2); alternate). Residues Lys-16 and Lys-27 each carry the N6-acetyllysine modification. Ser-32 bears the Phosphoserine mark. Lys-35 carries the N6-acetyllysine; alternate modification. Lys-35 carries the post-translational modification N6-succinyllysine; alternate. The active-site Cysteine sulfenic acid (-SOH) intermediate is the Cys-52. Thr-90 bears the Phosphothreonine mark. Residue Lys-120 forms a Glycyl lysine isopeptide (Lys-Gly) (interchain with G-Cter in SUMO2) linkage. Lys-136 carries the N6-acetyllysine modification. Residues 176-199 form a disordered region; it reads GWKPGSDTIKPDVQKSKEYFSKQK. A compositionally biased stretch (basic and acidic residues) spans 184 to 199; the sequence is IKPDVQKSKEYFSKQK. Residue Lys-185 forms a Glycyl lysine isopeptide (Lys-Gly) (interchain with G-Cter in SUMO1) linkage. Residue Lys-197 is modified to N6-acetyllysine.

It belongs to the peroxiredoxin family. AhpC/Prx1 subfamily. As to quaternary structure, homodimer; disulfide-linked, upon oxidation. 5 homodimers assemble to form a ring-like decamer. Interacts with GDPD5; forms a mixed-disulfide with GDPD5. Interacts with SESN1 and SESN2. Interacts with FAM107A. In terms of processing, phosphorylated on Thr-90 during the M-phase, which leads to a decrease in enzymatic activity. Post-translationally, acetylation increases reducing activity and resistance to superoxidation. Deacetylated by HDAC6 which decreases reducing activity. Detected in heart and skeletal muscle (at protein level).

It is found in the cytoplasm. The enzyme catalyses a hydroperoxide + [thioredoxin]-dithiol = an alcohol + [thioredoxin]-disulfide + H2O. Its function is as follows. Thiol-specific peroxidase that catalyzes the reduction of hydrogen peroxide and organic hydroperoxides to water and alcohols, respectively. Plays a role in cell protection against oxidative stress by detoxifying peroxides and as sensor of hydrogen peroxide-mediated signaling events. Might participate in the signaling cascades of growth factors and tumor necrosis factor-alpha by regulating the intracellular concentrations of H(2)O(2). Reduces an intramolecular disulfide bond in GDPD5 that gates the ability to GDPD5 to drive postmitotic motor neuron differentiation. The protein is Peroxiredoxin-1 (PRDX1) of Myotis lucifugus (Little brown bat).